The sequence spans 267 residues: Hydroxypyruvate/pyruvate aldolase Bphyt_5830 (267 aa).

Catalysis depends on histidine 48, which acts as the Proton acceptor. Positions 152 and 178 each coordinate a divalent metal cation.

This sequence belongs to the HpcH/HpaI aldolase family. It depends on a divalent metal cation as a cofactor.

The catalysed reaction is D-glyceraldehyde + 3-hydroxypyruvate = 2-dehydro-D-galactonate. It catalyses the reaction D-glyceraldehyde + 3-hydroxypyruvate = (3R,4S,5R)-3,4,5,6-tetrahydroxy-2-oxohexanoate. The enzyme catalyses D-glyceraldehyde + pyruvate = 2-dehydro-3-deoxy-L-galactonate. Functionally, aldolase which can catalyze in vitro the aldolisation reaction between hydroxypyruvate (HPA) or pyruvate (PA) and D-glyceraldehyde (D-GA). The condensation of hydroxypyruvate and D-glyceraldehyde produces 2-dehydro-D-galactonate as the major product and (3R,4S,5R)-3,4,5,6-tetrahydroxy-2-oxohexanoate. The condensation of pyruvate and D-glyceraldehyde produces 2-dehydro-3-deoxy-L-galactonate. The chain is Hydroxypyruvate/pyruvate aldolase Bphyt_5830 from Paraburkholderia phytofirmans (strain DSM 17436 / LMG 22146 / PsJN) (Burkholderia phytofirmans).